Here is a 437-residue protein sequence, read N- to C-terminus: F-box protein At3g62430 (437 aa).

The 49-residue stretch at 1–49 (MDRISNLPDGVIYRVISLLSTKEATCLKYTSKNWLNLVTIIPIAVFVDS) folds into the F-box domain.

The protein is F-box protein At3g62430 of Arabidopsis thaliana (Mouse-ear cress).